A 239-amino-acid polypeptide reads, in one-letter code: MRPSGRKTDQMRKISFERNFSKHAEGSCLVKFGDTHVLCTASLEDRTPPWLRNTGKGWVTAEYGMLPRATGERIKREASSGKQSGRTQEIQRLIGRSLRAVVDLEALGERQISLDCDVIQADGGTRTASITGAWIALHDCLKWMESRNIIKVDRVLKDHVAAISCGIFAAQPVIDLDYLEDSAAETDANFVMTGTGGIVEIQGTAEGKPFSQEEFLTLLGLAQTGIAELVDLQKQAIAG.

Residues arginine 86 and 124–126 (GTR) each bind phosphate.

Belongs to the RNase PH family. As to quaternary structure, homohexameric ring arranged as a trimer of dimers.

The enzyme catalyses tRNA(n+1) + phosphate = tRNA(n) + a ribonucleoside 5'-diphosphate. Phosphorolytic 3'-5' exoribonuclease that plays an important role in tRNA 3'-end maturation. Removes nucleotide residues following the 3'-CCA terminus of tRNAs; can also add nucleotides to the ends of RNA molecules by using nucleoside diphosphates as substrates, but this may not be physiologically important. Probably plays a role in initiation of 16S rRNA degradation (leading to ribosome degradation) during starvation. The chain is Ribonuclease PH from Allorhizobium ampelinum (strain ATCC BAA-846 / DSM 112012 / S4) (Agrobacterium vitis (strain S4)).